Consider the following 181-residue polypeptide: 3-hydroxyanthranilate 3,4-dioxygenase (181 aa).

Residue Arg46 coordinates O2. Residues His50, Glu56, and His95 each contribute to the Fe cation site. Residue Glu56 participates in substrate binding. The substrate site is built by Arg99 and Glu109.

It belongs to the 3-HAO family. Requires Fe(2+) as cofactor.

The protein resides in the cytoplasm. It carries out the reaction 3-hydroxyanthranilate + O2 = (2Z,4Z)-2-amino-3-carboxymuconate 6-semialdehyde. The protein operates within cofactor biosynthesis; NAD(+) biosynthesis; quinolinate from L-kynurenine: step 3/3. Functionally, catalyzes the oxidative ring opening of 3-hydroxyanthranilate to 2-amino-3-carboxymuconate semialdehyde, which spontaneously cyclizes to quinolinate. In Mycosarcoma maydis (Corn smut fungus), this protein is 3-hydroxyanthranilate 3,4-dioxygenase.